The primary structure comprises 689 residues: MIEMAAEKEPFLVPAPPPPLKDESGGGGGPTVPPHQEAASGELRGGTERGPGRCAPSAGSPAAAVGRESPGAAATSSSGPQAQQHRGGGPQAQSHGEARLSDPPGRAAPPDVGEERRGGGGTELGPPAPPRPRNGYQPHRPPGGGGGKRRNSCNVGGGGGGFKHPAFKRRRRVNSDCDSVLPSNFLLGGNIFDPLNLNSLLDEEVSRTLNAETPKSSPLPAKGRDPVEILIPKDITDPLSLNTCTDEGHVVLASPLKTGRKRHRHRGQHHQQQQAAGGSESHPVPPTAPLTPLLHGEGASQQPRHRGQNRDAPQPYELNTAINCRDEVVSPLPSALQGPSGSLSAPPAASVISAPPSSSSRHRKRRRTSSKSEAGARGGGQGSKEKGRGSWGGRHHHHHPLPAAGFKKQQRKFQYGNYCKYYGYRNPSCEDGRLRVLKPEWFRGRDVLDLGCNVGHLTLSIACKWGPSRMVGLDIDSRLIHSARQNIRHYLSEELRLPPQTLEGDPGAEGEEGTTTVRKRSCFPASLTASRGPIAAPQVPLDGADTSVFPNNVVFVTGNYVLDRDDLVEAQTPEYDVVLCLSLTKWVHLNWGDEGLKRMFRRIYRHLRPGGILVLEPQPWSSYGKRKTLTETIYKNYYRIQLKPEQFSSYLTSPDVGFSSYELVATPHNTSKGFQRPVYLFHKARSPSH.

Methionine 1 carries the post-translational modification N-acetylmethionine. The segment covering 1–10 (MIEMAAEKEP) has biased composition (basic and acidic residues). The disordered stretch occupies residues 1-167 (MIEMAAEKEP…GGGGFKHPAF (167 aa)). Residues 52 to 84 (GRCAPSAGSPAAAVGRESPGAAATSSSGPQAQQ) are compositionally biased toward low complexity. 4 positions are modified to phosphoserine: serine 57, serine 60, serine 69, and serine 101. An Omega-N-methylarginine modification is found at arginine 117. A phosphoserine mark is found at serine 152, serine 175, and serine 179. Threonine 213 carries the phosphothreonine modification. Phosphoserine is present on residues serine 216, serine 217, and serine 254. Residues 258–269 (TGRKRHRHRGQH) are compositionally biased toward basic residues. The segment at 258 to 314 (TGRKRHRHRGQHHQQQQAAGGSESHPVPPTAPLTPLLHGEGASQQPRHRGQNRDAPQ) is disordered. Threonine 291 carries the phosphothreonine modification. 2 positions are modified to phosphoserine: serine 330 and serine 344. Residues 332-407 (LPSALQGPSG…HHPLPAAGFK (76 aa)) form a disordered region. Residues 338-359 (GPSGSLSAPPAASVISAPPSSS) show a composition bias toward low complexity. Basic residues predominate over residues 360-369 (SRHRKRRRTS). Serine 390 is subject to Phosphoserine. S-adenosyl-L-methionine-binding positions include tyrosine 422, arginine 433, 451–453 (GCN), 474–475 (DI), 559–560 (NY), and leucine 581. The Bin3-type SAM domain maps to 431–686 (DGRLRVLKPE…PVYLFHKARS (256 aa)). Residue lysine 643 forms a Glycyl lysine isopeptide (Lys-Gly) (interchain with G-Cter in SUMO2) linkage.

The protein belongs to the methyltransferase superfamily. As to quaternary structure, core component of the 7SK RNP complex, at least composed of 7SK RNA, LARP7, MEPCE, HEXIM1 (or HEXIM2) and P-TEFb (composed of CDK9 and CCNT1/cyclin-T1). Interacts with METTL16. Interacts with RBM7; upon genotoxic stress this interaction is enhanced, triggering the release of inactive P-TEFb complex from the core, yielding to P-TEFb complex activation. Dephosphorylated at Ser-152 by the PNUTS-PP1 complex, promoting RNA polymerase II transcription pause-release. In terms of tissue distribution, expressed in chronic myeloid leukemia cells, adrenal gland, brain, cerebellum, kidney, lung, mammary gland and testis. Weakly or not expressed in other tissues.

The protein localises to the nucleus. It catalyses the reaction a 5'-end triphospho-guanosine-ribonucleotide-snRNA + S-adenosyl-L-methionine = a 5'-end methyltriphosphate-guanosine-ribonucleotide-snRNA + S-adenosyl-L-homocysteine. In terms of biological role, S-adenosyl-L-methionine-dependent methyltransferase that adds a methylphosphate cap at the 5'-end of 7SK snRNA (7SK RNA), leading to stabilize it. Also has a non-enzymatic function as part of the 7SK RNP complex: the 7SK RNP complex sequesters the positive transcription elongation factor b (P-TEFb) in a large inactive 7SK RNP complex preventing RNA polymerase II phosphorylation and subsequent transcriptional elongation. The 7SK RNP complex also promotes snRNA gene transcription by RNA polymerase II via interaction with the little elongation complex (LEC). In the 7SK RNP complex, MEPCE is required to stabilize 7SK RNA and facilitate the assembly of 7SK RNP complex. MEPCE has a non-enzymatic function in the 7SK RNP complex; interaction with LARP7 within the 7SK RNP complex occluding its catalytic center. Also required for stability of U6 snRNAs. The chain is 7SK snRNA methylphosphate capping enzyme from Homo sapiens (Human).